A 396-amino-acid chain; its full sequence is Phosphopentomutase (396 aa).

D13, D288, H293, D329, H330, and H341 together coordinate Mn(2+).

Belongs to the phosphopentomutase family. Mn(2+) is required as a cofactor.

The protein localises to the cytoplasm. It carries out the reaction 2-deoxy-alpha-D-ribose 1-phosphate = 2-deoxy-D-ribose 5-phosphate. It catalyses the reaction alpha-D-ribose 1-phosphate = D-ribose 5-phosphate. It participates in carbohydrate degradation; 2-deoxy-D-ribose 1-phosphate degradation; D-glyceraldehyde 3-phosphate and acetaldehyde from 2-deoxy-alpha-D-ribose 1-phosphate: step 1/2. Functionally, isomerase that catalyzes the conversion of deoxy-ribose 1-phosphate (dRib-1-P) and ribose 1-phosphate (Rib-1-P) to deoxy-ribose 5-phosphate (dRib-5-P) and ribose 5-phosphate (Rib-5-P), respectively. This Clostridium perfringens (strain SM101 / Type A) protein is Phosphopentomutase.